The sequence spans 257 residues: NAD-capped RNA hydrolase NudC (257 aa).

Residues Lys25 and Arg69 each contribute to the substrate site. Zn(2+) is bound by residues Cys98 and Cys101. Residue Glu111 coordinates substrate. Cys116 and Cys119 together coordinate Zn(2+). Residue Tyr124 coordinates substrate. In terms of domain architecture, Nudix hydrolase spans 125–248 (PQIAPCIIVA…TVARRLIEDT (124 aa)). Positions 158, 174, and 178 each coordinate a divalent metal cation. Positions 159–180 (GFVEVGETLEQAVAREVMEESG) match the Nudix box motif. Position 192–199 (192–199 (QPWPFPQS)) interacts with substrate. A divalent metal cation is bound at residue Glu219. Ala241 provides a ligand contact to substrate.

The protein belongs to the Nudix hydrolase family. NudC subfamily. Homodimer. Mg(2+) serves as cofactor. The cofactor is Mn(2+). Zn(2+) is required as a cofactor.

The catalysed reaction is a 5'-end NAD(+)-phospho-ribonucleoside in mRNA + H2O = a 5'-end phospho-adenosine-phospho-ribonucleoside in mRNA + beta-nicotinamide D-ribonucleotide + 2 H(+). The enzyme catalyses NAD(+) + H2O = beta-nicotinamide D-ribonucleotide + AMP + 2 H(+). It carries out the reaction NADH + H2O = reduced beta-nicotinamide D-ribonucleotide + AMP + 2 H(+). In terms of biological role, mRNA decapping enzyme that specifically removes the nicotinamide adenine dinucleotide (NAD) cap from a subset of mRNAs by hydrolyzing the diphosphate linkage to produce nicotinamide mononucleotide (NMN) and 5' monophosphate mRNA. The NAD-cap is present at the 5'-end of some mRNAs and stabilizes RNA against 5'-processing. Has preference for mRNAs with a 5'-end purine. Catalyzes the hydrolysis of a broad range of dinucleotide pyrophosphates. This chain is NAD-capped RNA hydrolase NudC, found in Shigella flexneri serotype 5b (strain 8401).